A 311-amino-acid chain; its full sequence is Methionyl-tRNA formyltransferase (311 aa).

110 to 113 is a (6S)-5,6,7,8-tetrahydrofolate binding site; it reads SLLP.

Belongs to the Fmt family.

The catalysed reaction is L-methionyl-tRNA(fMet) + (6R)-10-formyltetrahydrofolate = N-formyl-L-methionyl-tRNA(fMet) + (6S)-5,6,7,8-tetrahydrofolate + H(+). Functionally, attaches a formyl group to the free amino group of methionyl-tRNA(fMet). The formyl group appears to play a dual role in the initiator identity of N-formylmethionyl-tRNA by promoting its recognition by IF2 and preventing the misappropriation of this tRNA by the elongation apparatus. In Streptococcus thermophilus (strain ATCC BAA-250 / LMG 18311), this protein is Methionyl-tRNA formyltransferase.